Here is a 137-residue protein sequence, read N- to C-terminus: Large ribosomal subunit protein uL16 (137 aa).

Positions 1 to 17 are enriched in basic residues; it reads MLQPKRTKFRKTHKGRN. The disordered stretch occupies residues 1–24; the sequence is MLQPKRTKFRKTHKGRNRGLANTG.

The protein belongs to the universal ribosomal protein uL16 family. Part of the 50S ribosomal subunit.

In terms of biological role, binds 23S rRNA and is also seen to make contacts with the A and possibly P site tRNAs. The chain is Large ribosomal subunit protein uL16 from Aeromonas salmonicida (strain A449).